Here is a 500-residue protein sequence, read N- to C-terminus: ATP synthase subunit alpha (500 aa).

169–176 contributes to the ATP binding site; sequence GDRQTGKT.

The protein belongs to the ATPase alpha/beta chains family. As to quaternary structure, F-type ATPases have 2 components, CF(1) - the catalytic core - and CF(0) - the membrane proton channel. CF(1) has five subunits: alpha(3), beta(3), gamma(1), delta(1), epsilon(1). CF(0) has three main subunits: a(1), b(2) and c(9-12). The alpha and beta chains form an alternating ring which encloses part of the gamma chain. CF(1) is attached to CF(0) by a central stalk formed by the gamma and epsilon chains, while a peripheral stalk is formed by the delta and b chains.

Its subcellular location is the cell membrane. The enzyme catalyses ATP + H2O + 4 H(+)(in) = ADP + phosphate + 5 H(+)(out). In terms of biological role, produces ATP from ADP in the presence of a proton gradient across the membrane. The alpha chain is a regulatory subunit. The protein is ATP synthase subunit alpha of Lactococcus lactis subsp. cremoris (strain MG1363).